We begin with the raw amino-acid sequence, 342 residues long: UDP-xylose transporter 1 (342 aa).

10 consecutive transmembrane segments (helical) span residues 7-27 (MQMG…SIVI), 36-56 (LGFP…YCTL), 75-95 (VVLF…SLGF), 100-120 (FYQM…TLFL), 132-152 (LFLL…LNFV), 154-174 (SVLS…TNTI), 184-204 (QLLY…GPFV), 221-241 (IVVG…FSTF), 250-270 (VTYQ…GYTL), and 280-300 (IAGI…CSVA). Positions 305 to 342 (QASSDSTFLGKDRDTTPLLGQENENHHEAKKLDKHSPV) are disordered. Over residues 327–342 (NENHHEAKKLDKHSPV) the composition is skewed to basic and acidic residues.

The protein belongs to the TPT transporter family. TPT (TC 2.A.7.9) subfamily. In terms of tissue distribution, ubiquitous.

It is found in the golgi apparatus membrane. It localises to the endoplasmic reticulum membrane. Nucleotide-sugar transporter that transports UDP-xylose and UMP in a strict counter-exchange mode. The sequence is that of UDP-xylose transporter 1 from Arabidopsis thaliana (Mouse-ear cress).